The chain runs to 420 residues: Tyrosine--tRNA ligase 1 (420 aa).

Residue Tyr-35 participates in L-tyrosine binding. The short motif at 40–49 is the 'HIGH' region element; sequence PTAGSLHIGH. Positions 172 and 176 each coordinate L-tyrosine. The short motif at 232–236 is the 'KMSKS' region element; that stretch reads KFGKT. ATP is bound at residue Lys-235. Positions 355–419 constitute an S4 RNA-binding domain; sequence INIAELLVKS…GKKQFRLIKL (65 aa).

It belongs to the class-I aminoacyl-tRNA synthetase family. TyrS type 1 subfamily. As to quaternary structure, homodimer.

The protein resides in the cytoplasm. The enzyme catalyses tRNA(Tyr) + L-tyrosine + ATP = L-tyrosyl-tRNA(Tyr) + AMP + diphosphate + H(+). Catalyzes the attachment of tyrosine to tRNA(Tyr) in a two-step reaction: tyrosine is first activated by ATP to form Tyr-AMP and then transferred to the acceptor end of tRNA(Tyr). This Pseudoalteromonas translucida (strain TAC 125) protein is Tyrosine--tRNA ligase 1.